The sequence spans 547 residues: Chaperonin GroEL (547 aa).

ATP-binding positions include 30-33, K51, 87-91, G415, and D496; these read TLGP and DGTTT. The disordered stretch occupies residues 527–547; that stretch reads SDKAEPMPMRGGMGGMGGMDF. The segment covering 537 to 547 has biased composition (gly residues); the sequence is GGMGGMGGMDF.

It belongs to the chaperonin (HSP60) family. In terms of assembly, forms a cylinder of 14 subunits composed of two heptameric rings stacked back-to-back. Interacts with the co-chaperonin GroES.

The protein resides in the cytoplasm. It catalyses the reaction ATP + H2O + a folded polypeptide = ADP + phosphate + an unfolded polypeptide.. Functionally, together with its co-chaperonin GroES, plays an essential role in assisting protein folding. The GroEL-GroES system forms a nano-cage that allows encapsulation of the non-native substrate proteins and provides a physical environment optimized to promote and accelerate protein folding. The sequence is that of Chaperonin GroEL from Rickettsia africae (strain ESF-5).